A 121-amino-acid chain; its full sequence is Fumarate reductase subunit D (121 aa).

The next 3 helical transmembrane spans lie at 22-42 (GVWF…LLPL), 57-77 (AFVS…LPMW), and 100-120 (YACY…VIQL).

The protein belongs to the FrdD family. In terms of assembly, part of an enzyme complex containing four subunits: a flavoprotein (FrdA), an iron-sulfur protein (FrdB), and two hydrophobic anchor proteins (FrdC and FrdD).

The protein localises to the cell inner membrane. Anchors the catalytic components of the fumarate reductase complex to the cell membrane, binds quinones. The protein is Fumarate reductase subunit D of Shewanella putrefaciens (strain CN-32 / ATCC BAA-453).